Reading from the N-terminus, the 96-residue chain is Co-chaperonin GroES (96 aa).

It belongs to the GroES chaperonin family. Heptamer of 7 subunits arranged in a ring. Interacts with the chaperonin GroEL.

The protein localises to the cytoplasm. In terms of biological role, together with the chaperonin GroEL, plays an essential role in assisting protein folding. The GroEL-GroES system forms a nano-cage that allows encapsulation of the non-native substrate proteins and provides a physical environment optimized to promote and accelerate protein folding. GroES binds to the apical surface of the GroEL ring, thereby capping the opening of the GroEL channel. The chain is Co-chaperonin GroES from Methylobacillus flagellatus (strain ATCC 51484 / DSM 6875 / VKM B-1610 / KT).